A 461-amino-acid chain; its full sequence is Cysteine--tRNA ligase (461 aa).

Cys-28 is a binding site for Zn(2+). The 'HIGH' region signature appears at 30–40 (VTIYDLCHIGH). Zn(2+) contacts are provided by Cys-211, His-236, and Glu-240. The short motif at 268-272 (KMSKS) is the 'KMSKS' region element. ATP is bound at residue Lys-271.

This sequence belongs to the class-I aminoacyl-tRNA synthetase family. As to quaternary structure, monomer. Zn(2+) is required as a cofactor.

Its subcellular location is the cytoplasm. The catalysed reaction is tRNA(Cys) + L-cysteine + ATP = L-cysteinyl-tRNA(Cys) + AMP + diphosphate. The chain is Cysteine--tRNA ligase from Aliivibrio fischeri (strain ATCC 700601 / ES114) (Vibrio fischeri).